The sequence spans 201 residues: Dephospho-CoA kinase (201 aa).

Residues 4 to 201 (AFFVTASIAC…VIQEISKGKM (198 aa)) form the DPCK domain. 12–17 (ACGKST) serves as a coordination point for ATP.

It belongs to the CoaE family.

It localises to the cytoplasm. It carries out the reaction 3'-dephospho-CoA + ATP = ADP + CoA + H(+). The protein operates within cofactor biosynthesis; coenzyme A biosynthesis; CoA from (R)-pantothenate: step 5/5. Catalyzes the phosphorylation of the 3'-hydroxyl group of dephosphocoenzyme A to form coenzyme A. The polypeptide is Dephospho-CoA kinase (Campylobacter jejuni (strain RM1221)).